A 306-amino-acid polypeptide reads, in one-letter code: Bifunctional protein FolD 1 (306 aa).

NADP(+) contacts are provided by residues 168–170 (GRS), serine 193, and isoleucine 234.

This sequence belongs to the tetrahydrofolate dehydrogenase/cyclohydrolase family. As to quaternary structure, homodimer.

It carries out the reaction (6R)-5,10-methylene-5,6,7,8-tetrahydrofolate + NADP(+) = (6R)-5,10-methenyltetrahydrofolate + NADPH. The catalysed reaction is (6R)-5,10-methenyltetrahydrofolate + H2O = (6R)-10-formyltetrahydrofolate + H(+). Its pathway is one-carbon metabolism; tetrahydrofolate interconversion. Catalyzes the oxidation of 5,10-methylenetetrahydrofolate to 5,10-methenyltetrahydrofolate and then the hydrolysis of 5,10-methenyltetrahydrofolate to 10-formyltetrahydrofolate. The polypeptide is Bifunctional protein FolD 1 (Rhizobium meliloti (strain 1021) (Ensifer meliloti)).